An 836-amino-acid chain; its full sequence is Sucrose synthase 5 (836 aa).

The tract at residues Arg270–Thr748 is GT-B glycosyltransferase. The interval Pro805–Ala836 is disordered.

The protein belongs to the glycosyltransferase 1 family. Plant sucrose synthase subfamily. As to expression, detected in the whole plant but more precisely confined to the vasculature in cotyledons, leaves, petals, anthers and roots. Also detected in developing siliques, young immature rosette and cauline leaves.

It is found in the secreted. The protein localises to the cell wall. The catalysed reaction is an NDP-alpha-D-glucose + D-fructose = a ribonucleoside 5'-diphosphate + sucrose + H(+). Sucrose-cleaving enzyme that provides UDP-glucose and fructose for various metabolic pathways. Functions in callose synthesis at the site of phloem sieve elements. The chain is Sucrose synthase 5 (SUS5) from Arabidopsis thaliana (Mouse-ear cress).